A 596-amino-acid polypeptide reads, in one-letter code: Actin-related protein 9 (596 aa).

Positions 148–178 (LASPAETSPDKGDASASEAVPDVTDSKDTSE) are disordered.

This sequence belongs to the actin family. ARP8 subfamily.

In Arabidopsis thaliana (Mouse-ear cress), this protein is Actin-related protein 9 (ARP9).